A 158-amino-acid chain; its full sequence is MSDLTHLDETGKARMVDVGAKDETLREAVVRGEVHMRPETLQRLAAGDMPKGDALATARIAGIMAAKRAPDLIPLCHPLLLTHVAVDVRLDAATSTVQIEATVRTVGKTGVEMEALTAVSVAALTVYDMCKAIDRTMQIGAIRLVRKSGGRSGEIVCE.

Residues 75-77 (LCH) and 113-114 (ME) each bind substrate. The active site involves aspartate 128.

This sequence belongs to the MoaC family. In terms of assembly, homohexamer; trimer of dimers.

The enzyme catalyses (8S)-3',8-cyclo-7,8-dihydroguanosine 5'-triphosphate = cyclic pyranopterin phosphate + diphosphate. The protein operates within cofactor biosynthesis; molybdopterin biosynthesis. Functionally, catalyzes the conversion of (8S)-3',8-cyclo-7,8-dihydroguanosine 5'-triphosphate to cyclic pyranopterin monophosphate (cPMP). The sequence is that of Cyclic pyranopterin monophosphate synthase from Roseiflexus castenholzii (strain DSM 13941 / HLO8).